The primary structure comprises 429 residues: Gamma-glutamyl phosphate reductase (429 aa).

Belongs to the gamma-glutamyl phosphate reductase family.

The protein localises to the cytoplasm. The catalysed reaction is L-glutamate 5-semialdehyde + phosphate + NADP(+) = L-glutamyl 5-phosphate + NADPH + H(+). It functions in the pathway amino-acid biosynthesis; L-proline biosynthesis; L-glutamate 5-semialdehyde from L-glutamate: step 2/2. Functionally, catalyzes the NADPH-dependent reduction of L-glutamate 5-phosphate into L-glutamate 5-semialdehyde and phosphate. The product spontaneously undergoes cyclization to form 1-pyrroline-5-carboxylate. The polypeptide is Gamma-glutamyl phosphate reductase (Rhizorhabdus wittichii (strain DSM 6014 / CCUG 31198 / JCM 15750 / NBRC 105917 / EY 4224 / RW1) (Sphingomonas wittichii)).